We begin with the raw amino-acid sequence, 116 residues long: Small ribosomal subunit protein uS11m (116 aa).

The protein belongs to the universal ribosomal protein uS11 family.

Its subcellular location is the mitochondrion. The chain is Small ribosomal subunit protein uS11m (RPS11) from Chondrus crispus (Carrageen Irish moss).